Reading from the N-terminus, the 636-residue chain is Leucine-rich repeat and fibronectin type-III domain-containing protein 4 (636 aa).

Residues 1–16 form the signal peptide; that stretch reads MAPPLLLLLLASGAAA. Residues 17-48 enclose the LRRNT domain; that stretch reads CPLPCVCQNLSESLSTLCAHRGLLFVPPNVDR. At 17-518 the chain is on the extracellular side; that stretch reads CPLPCVCQNL…LQAHVLGGTL (502 aa). N-linked (GlcNAc...) asparagine glycosylation is found at asparagine 25 and asparagine 70. LRR repeat units follow at residues 49-70, 73-94, 97-118, 121-142, 146-169, 170-191, and 194-215; these read RTVE…DFRN, GLVD…SFGD, SLRS…SLRG, NLQH…AFDD, SLED…GSMP, ALHT…VFAQ, and QLSR…PLFS. An LRRCT domain is found at 234 to 280; sequence NPLHCNCELLWLRRLARPDDLETCASPPTLAGRYFWAVPEGEFSCEP. An Ig-like domain is found at 281 to 367; the sequence is PLIARHTQRL…GEATARVELR (87 aa). Cysteine 302 and cysteine 351 are oxidised to a cystine. Asparagine 324, asparagine 333, asparagine 376, and asparagine 440 each carry an N-linked (GlcNAc...) asparagine glycan. One can recognise a Fibronectin type-III domain in the interval 405–502; it reads SEPAVQVTEV…GCAHFSTLPA (98 aa). A helical transmembrane segment spans residues 519–539; sequence TVAVGGVLVAALLVFTVALLV. Residues 540-636 lie on the Cytoplasmic side of the membrane; it reads RGRGAGNGRL…SAERLEESVV (97 aa). The disordered stretch occupies residues 556–585; sequence VQSQTNGGTSPMPKSHPPRSPPPRPQRSCS. A compositionally biased stretch (pro residues) spans 569 to 580; the sequence is KSHPPRSPPPRP. A phosphoserine mark is found at serine 585 and serine 627. Residues 633 to 636 carry the PDZ-binding motif; it reads ESVV.

The protein belongs to the LRFN family. In terms of assembly, can form heteromeric complexes with LRFN1, LRFN2, LRFN3 and LRFN5. Unable to form homophilic interactions across cell junctions. Interacts with DLG1, DLG2 and DLG3. Also interacts with DLG4. Post-translationally, glycosylated. Expressed in brain and testis. In the brain, weak, but broad expression in the cerebral cortex and diencephalic nuclei. Also detected in other parts of the central nervous system, including the olfactory bulb, pons, cerebellum, and medulla oblongata, as well as in the peripheral nervous system, such as the ganglia of cranial nerves and the dorsal root ganglion during gestation.

It is found in the membrane. Its function is as follows. Promotes neurite outgrowth in hippocampal neurons. May play a role in redistributing DLG4 to the cell periphery. This chain is Leucine-rich repeat and fibronectin type-III domain-containing protein 4 (Lrfn4), found in Mus musculus (Mouse).